We begin with the raw amino-acid sequence, 559 residues long: Urocanate hydratase (559 aa).

Residues 54–55 (GG), glutamine 132, 178–180 (GMG), glutamate 198, arginine 203, 244–245 (NA), 265–269 (QTSAH), 275–276 (YL), and tyrosine 324 each bind NAD(+). Residue cysteine 412 is part of the active site. Glycine 494 provides a ligand contact to NAD(+).

Belongs to the urocanase family. Requires NAD(+) as cofactor.

The protein localises to the cytoplasm. It catalyses the reaction 4-imidazolone-5-propanoate = trans-urocanate + H2O. The protein operates within amino-acid degradation; L-histidine degradation into L-glutamate; N-formimidoyl-L-glutamate from L-histidine: step 2/3. Its function is as follows. Catalyzes the conversion of urocanate to 4-imidazolone-5-propionate. This chain is Urocanate hydratase, found in Photorhabdus laumondii subsp. laumondii (strain DSM 15139 / CIP 105565 / TT01) (Photorhabdus luminescens subsp. laumondii).